The primary structure comprises 445 residues: Probable glycine dehydrogenase (decarboxylating) subunit 1 (445 aa).

This sequence belongs to the GcvP family. N-terminal subunit subfamily. The glycine cleavage system is composed of four proteins: P, T, L and H. In this organism, the P 'protein' is a heterodimer of two subunits.

It carries out the reaction N(6)-[(R)-lipoyl]-L-lysyl-[glycine-cleavage complex H protein] + glycine + H(+) = N(6)-[(R)-S(8)-aminomethyldihydrolipoyl]-L-lysyl-[glycine-cleavage complex H protein] + CO2. Functionally, the glycine cleavage system catalyzes the degradation of glycine. The P protein binds the alpha-amino group of glycine through its pyridoxal phosphate cofactor; CO(2) is released and the remaining methylamine moiety is then transferred to the lipoamide cofactor of the H protein. The polypeptide is Probable glycine dehydrogenase (decarboxylating) subunit 1 (Citrifermentans bemidjiense (strain ATCC BAA-1014 / DSM 16622 / JCM 12645 / Bem) (Geobacter bemidjiensis)).